The chain runs to 580 residues: Trafficking protein particle complex subunit 14 (580 aa).

2 disordered regions span residues 95–134 and 480–533; these read GSAG…TSGG and VSHP…RSGS. A compositionally biased stretch (gly residues) spans 105–116; sequence PGGGDPGGGGLF. At Ser-491 the chain carries Phosphoserine. Residues 492–502 are compositionally biased toward low complexity; that stretch reads RKSSPSSPAVR. The span at 512 to 525 shows a compositional bias: polar residues; it reads LGRSQSFSHQQPSR. Phosphoserine is present on Ser-517. At Thr-541 the chain carries Phosphothreonine. Phosphoserine is present on Ser-546.

As to quaternary structure, component of the multisubunit TRAPP II complex, which includes at least TRAPPC1, TRAPPC2, TRAPPC2L, TRAPPC3, TRAPPC4, TRAPPC5, TRAPPC6A/B, TRAPPC9, TRAPPC10 and TRAPPC14. TRAPPC9, TRAPPC10 and TRAPPC14 are specific subunits of the TRAPP II complex. Interacts with alpha-tubulin during mitosis. Interacts with RAB3IP (via the N-terminal region); this interaction mediates RAB3IP association with the TRAPP II complex. Interacts with TRAPPC10. Interacts with FBF1.

It localises to the cytoplasm. Its subcellular location is the cytoskeleton. The protein localises to the spindle. The protein resides in the vesicle. It is found in the midbody. Functionally, specific subunit of the TRAPP (transport protein particle) II complex, a highly conserved vesicle tethering complex that functions in late Golgi trafficking as a membrane tether. TRAPPC14 is dispensable for TRAPPII complex integrity but mediates RAB3IP preciliary vesicle trafficking to the mother centriole during ciliogenesis. Modulates YAP1 activity as transcriptional regulator. This Mus musculus (Mouse) protein is Trafficking protein particle complex subunit 14.